The primary structure comprises 927 residues: Protein unc-45 homolog B (927 aa).

3 TPR repeats span residues 4 to 37 (PVQLKEEGNKYFQSNDYGNAIECYSKALKLITDK), 41 to 74 (AVLYRNRSACYLKQENYIQAAADASKAIDVDASD), and 76 to 108 (KALFRRCQALEKLGKLDQAYKDVQRCATLEPKN). 3 ARM repeats span residues 167–206 (DAGAERIFQNNGVNLLMQLIETKDPELILSAVRTLSGMCT), 209–248 (RARATAIVHLVGINKICSIMAVDHEEIALAACNLLQNIVD), and 746–785 (DKLRQKIVKEKALPEIENYMFENHEQIRQAATECMCNLAV).

The protein resides in the cytoplasm. It is found in the myofibril. Its subcellular location is the sarcomere. The protein localises to the z line. It localises to the a band. The protein resides in the perinuclear region. It is found in the cytosol. Its function is as follows. Acts as a co-chaperone for HSP90 and is required for proper folding of the myosin motor domain. Plays a role in sarcomere formation during muscle cell assembly. Is necessary for normal early lens development. In Xenopus laevis (African clawed frog), this protein is Protein unc-45 homolog B.